Reading from the N-terminus, the 278-residue chain is SLAM family member 8 (278 aa).

A signal peptide spans 1-20 (MWSLWSLLLFEALLPVVVVS). Residues 21-231 (VQVLSKVGDS…AASGKASYKD (211 aa)) are Extracellular-facing. 2 N-linked (GlcNAc...) asparagine glycosylation sites follow: Asn-83 and Asn-154. Positions 126 to 213 (PEVQVFTAAA…PVSWDMTTVT (88 aa)) constitute an Ig-like C2-type domain. Cysteines 150 and 199 form a disulfide. Residues 232 to 252 (VLLVVVPITLFLILAGLFGAW) form a helical membrane-spanning segment. The Cytoplasmic portion of the chain corresponds to 253–278 (HHGLCSGKKKDACTDGVLPETENALV).

Its subcellular location is the membrane. Functionally, may play a role in B-lineage commitment and/or modulation of signaling through the B-cell receptor. The protein is SLAM family member 8 (Slamf8) of Mus musculus (Mouse).